The chain runs to 124 residues: Large ribosomal subunit protein bL12 (124 aa).

Basic and acidic residues predominate over residues 102–116; the sequence is MSKEDAEAAKTKLEE. A disordered region spans residues 102–124; sequence MSKEDAEAAKTKLEEAGASVELK.

Belongs to the bacterial ribosomal protein bL12 family. Homodimer. Part of the ribosomal stalk of the 50S ribosomal subunit. Forms a multimeric L10(L12)X complex, where L10 forms an elongated spine to which 2 to 4 L12 dimers bind in a sequential fashion. Binds GTP-bound translation factors.

In terms of biological role, forms part of the ribosomal stalk which helps the ribosome interact with GTP-bound translation factors. Is thus essential for accurate translation. This Chromohalobacter salexigens (strain ATCC BAA-138 / DSM 3043 / CIP 106854 / NCIMB 13768 / 1H11) protein is Large ribosomal subunit protein bL12.